We begin with the raw amino-acid sequence, 220 residues long: Endonuclease NucS (220 aa).

This sequence belongs to the NucS endonuclease family.

The protein resides in the cytoplasm. Functionally, cleaves both 3' and 5' ssDNA extremities of branched DNA structures. The polypeptide is Endonuclease NucS (Frankia alni (strain DSM 45986 / CECT 9034 / ACN14a)).